Consider the following 311-residue polypeptide: Acetyl-coenzyme A carboxylase carboxyl transferase subunit alpha (311 aa).

One can recognise a CoA carboxyltransferase C-terminal domain in the interval 36-286; it reads NLDKEVSKIF…GEYFLSELKK (251 aa).

The protein belongs to the AccA family. In terms of assembly, acetyl-CoA carboxylase is a heterohexamer composed of biotin carboxyl carrier protein (AccB), biotin carboxylase (AccC) and two subunits each of ACCase subunit alpha (AccA) and ACCase subunit beta (AccD).

Its subcellular location is the cytoplasm. The enzyme catalyses N(6)-carboxybiotinyl-L-lysyl-[protein] + acetyl-CoA = N(6)-biotinyl-L-lysyl-[protein] + malonyl-CoA. It functions in the pathway lipid metabolism; malonyl-CoA biosynthesis; malonyl-CoA from acetyl-CoA: step 1/1. Functionally, component of the acetyl coenzyme A carboxylase (ACC) complex. First, biotin carboxylase catalyzes the carboxylation of biotin on its carrier protein (BCCP) and then the CO(2) group is transferred by the carboxyltransferase to acetyl-CoA to form malonyl-CoA. This chain is Acetyl-coenzyme A carboxylase carboxyl transferase subunit alpha, found in Sulfurimonas denitrificans (strain ATCC 33889 / DSM 1251) (Thiomicrospira denitrificans (strain ATCC 33889 / DSM 1251)).